Reading from the N-terminus, the 351-residue chain is Tetraacyldisaccharide 4'-kinase (351 aa).

47–54 (KAGGTGKT) lines the ATP pocket.

Belongs to the LpxK family.

It catalyses the reaction a lipid A disaccharide + ATP = a lipid IVA + ADP + H(+). It functions in the pathway glycolipid biosynthesis; lipid IV(A) biosynthesis; lipid IV(A) from (3R)-3-hydroxytetradecanoyl-[acyl-carrier-protein] and UDP-N-acetyl-alpha-D-glucosamine: step 6/6. Transfers the gamma-phosphate of ATP to the 4'-position of a tetraacyldisaccharide 1-phosphate intermediate (termed DS-1-P) to form tetraacyldisaccharide 1,4'-bis-phosphate (lipid IVA). This is Tetraacyldisaccharide 4'-kinase from Cytophaga hutchinsonii (strain ATCC 33406 / DSM 1761 / CIP 103989 / NBRC 15051 / NCIMB 9469 / D465).